The sequence spans 507 residues: Serine/threonine-protein kinase BSK11 (507 aa).

Glycine 2 carries N-myristoyl glycine lipidation. The segment covering 16 to 26 (DKKITSDDLSG) has biased composition (basic and acidic residues). The disordered stretch occupies residues 16-44 (DKKITSDDLSGRRGKGAKRGNRHRHANIN). Over residues 27 to 41 (RRGKGAKRGNRHRHA) the composition is skewed to basic residues. The 258-residue stretch at 75–332 (NAVVSVCSDQ…GDIISVITTL (258 aa)) folds into the Protein kinase domain. Residues 81–89 (CSDQEPNLV) and lysine 106 contribute to the ATP site. The active-site Proton acceptor is aspartate 200.

It belongs to the protein kinase superfamily. Ser/Thr protein kinase family. As to quaternary structure, interacts with BRI1, ASK7/BIN2, BSK1, BSK6 and BSK8. In terms of processing, phosphorylated by BRI1, ASK7/BIN2 and ASK9/BIL2.

It localises to the cell membrane. It carries out the reaction L-seryl-[protein] + ATP = O-phospho-L-seryl-[protein] + ADP + H(+). The enzyme catalyses L-threonyl-[protein] + ATP = O-phospho-L-threonyl-[protein] + ADP + H(+). Its function is as follows. Probable serine/threonine kinase that acts as a positive regulator of brassinosteroid (BR) signaling downstream of the receptor kinase BRI1. In Arabidopsis thaliana (Mouse-ear cress), this protein is Serine/threonine-protein kinase BSK11.